Reading from the N-terminus, the 444-residue chain is Argininosuccinate synthase (444 aa).

ATP is bound by residues 18–26 and alanine 44; that span reads AFSGGLDTS. Residue tyrosine 100 coordinates L-citrulline. ATP contacts are provided by glycine 130 and threonine 132. L-aspartate-binding residues include threonine 132, asparagine 136, and aspartate 137. Asparagine 136 lines the L-citrulline pocket. Aspartate 137 provides a ligand contact to ATP. L-citrulline contacts are provided by arginine 140 and serine 193. Aspartate 195 provides a ligand contact to ATP. The L-citrulline site is built by threonine 202, glutamate 204, and glutamate 281.

This sequence belongs to the argininosuccinate synthase family. Type 2 subfamily. As to quaternary structure, homotetramer.

It is found in the cytoplasm. The enzyme catalyses L-citrulline + L-aspartate + ATP = 2-(N(omega)-L-arginino)succinate + AMP + diphosphate + H(+). The protein operates within amino-acid biosynthesis; L-arginine biosynthesis; L-arginine from L-ornithine and carbamoyl phosphate: step 2/3. The polypeptide is Argininosuccinate synthase (Haemophilus influenzae (strain PittEE)).